A 250-amino-acid chain; its full sequence is 2,3-bisphosphoglycerate-dependent phosphoglycerate mutase (250 aa).

Residues 12–19 (RHGQSAWN), 25–26 (TG), Arg64, 91–94 (ERHY), Lys102, 118–119 (RR), and 185–186 (GN) each bind substrate. His13 functions as the Tele-phosphohistidine intermediate in the catalytic mechanism. Glu91 serves as the catalytic Proton donor/acceptor.

It belongs to the phosphoglycerate mutase family. BPG-dependent PGAM subfamily.

It carries out the reaction (2R)-2-phosphoglycerate = (2R)-3-phosphoglycerate. The protein operates within carbohydrate degradation; glycolysis; pyruvate from D-glyceraldehyde 3-phosphate: step 3/5. In terms of biological role, catalyzes the interconversion of 2-phosphoglycerate and 3-phosphoglycerate. The polypeptide is 2,3-bisphosphoglycerate-dependent phosphoglycerate mutase (Corynebacterium efficiens (strain DSM 44549 / YS-314 / AJ 12310 / JCM 11189 / NBRC 100395)).